We begin with the raw amino-acid sequence, 187 residues long: MTTMKRSADPEAEEDPDPSLGKFIEQVVSGPTQKGFPASGAFATPRARRSRGPKRFLGKRNYRRARARKPGKRDRAHSSKVRSSDGSTRPSARYGMRFRSPTLPLCSRPRTWEFLLDLGYDSMSLKSARVASERPCDPGRANHVWEPGGLSPEQAQWDWVGKVYSRDRVLKLMGELHELVYRESGRR.

The disordered stretch occupies residues methionine 1–glycine 95. Over residues arginine 46–lysine 80 the composition is skewed to basic residues.

Its subcellular location is the mitochondrion. This is an uncharacterized protein from Arabidopsis thaliana (Mouse-ear cress).